The following is a 375-amino-acid chain: 2-heptyl-3-hydroxy-4(1H)-quinolone synthase (375 aa).

Belongs to the 3-hydroxybenzoate 6-hydroxylase family.

It carries out the reaction 2-heptyl-4(1H)-quinolone + NADH + O2 + H(+) = 2-heptyl-3-hydroxy-4(1H)-quinolone + NAD(+) + H2O. In terms of biological role, involved in the degradation pathway of the Pseudomonas aeruginosa quorum sensing signal molecule HHQ (2-heptyl-4(1H)-quinolone) to anthranilate. Catalyzes the hydroxylation of HHQ to PQS (2-heptyl-3-hydroxy-4(1H)-quinolone). The polypeptide is 2-heptyl-3-hydroxy-4(1H)-quinolone synthase (Mycobacteroides abscessus (strain ATCC 19977 / DSM 44196 / CCUG 20993 / CIP 104536 / JCM 13569 / NCTC 13031 / TMC 1543 / L948) (Mycobacterium abscessus)).